We begin with the raw amino-acid sequence, 119 residues long: Large ribosomal subunit protein bL20 (119 aa).

The protein belongs to the bacterial ribosomal protein bL20 family.

Functionally, binds directly to 23S ribosomal RNA and is necessary for the in vitro assembly process of the 50S ribosomal subunit. It is not involved in the protein synthesizing functions of that subunit. This Xylella fastidiosa (strain M12) protein is Large ribosomal subunit protein bL20.